The chain runs to 154 residues: Egg-lysin (154 aa).

The signal sequence occupies residues 1–18; it reads MKLLVLCIFAMMATLAMS.

As to quaternary structure, homodimer. Sperm.

Its function is as follows. Dissolves the egg vitelline layer nonenzymatically during fertilization. It creates a hole of about 3 mu-m in diameter through which the sperm pass. The chain is Egg-lysin from Haliotis sorenseni (White abalone).